The sequence spans 399 residues: LIM/homeobox protein Lhx5 (399 aa).

2 consecutive LIM zinc-binding domains span residues 3-61 (VHCA…RRFG) and 62-125 (TKCA…ASAI). Disordered stretches follow at residues 136–185 (CTDR…GPRT) and 301–399 (PSSQ…NTVW). Residues 151–167 (DDTKETDNSTSSDKDTN) show a composition bias toward basic and acidic residues. The homeobox DNA-binding region spans 180–239 (RRGPRTTIKAKQLETLKAAFVATPKPTRHIREQLAQETGLNMRVIQVWFQNRRSKERRMK).

The protein resides in the nucleus. Probably involved in the patterning of the nervous system, in particular in the early specification of the diencephalon. This chain is LIM/homeobox protein Lhx5 (lhx5), found in Danio rerio (Zebrafish).